The following is a 320-amino-acid chain: Phospho-N-acetylmuramoyl-pentapeptide-transferase (320 aa).

10 consecutive transmembrane segments (helical) span residues Phe-6–Gly-26, Met-54–Leu-74, Leu-81–Ile-101, Leu-117–Ser-137, Ile-145–Phe-165, Ile-175–Phe-195, Ile-200–Asn-220, Ile-226–Leu-246, Phe-251–Val-271, and Arg-300–Phe-320.

Belongs to the glycosyltransferase 4 family. MraY subfamily. Requires Mg(2+) as cofactor.

It is found in the cell membrane. The catalysed reaction is UDP-N-acetyl-alpha-D-muramoyl-L-alanyl-gamma-D-glutamyl-L-lysyl-D-alanyl-D-alanine + di-trans,octa-cis-undecaprenyl phosphate = Mur2Ac(oyl-L-Ala-gamma-D-Glu-L-Lys-D-Ala-D-Ala)-di-trans,octa-cis-undecaprenyl diphosphate + UMP. The protein operates within cell wall biogenesis; peptidoglycan biosynthesis. Catalyzes the initial step of the lipid cycle reactions in the biosynthesis of the cell wall peptidoglycan: transfers peptidoglycan precursor phospho-MurNAc-pentapeptide from UDP-MurNAc-pentapeptide onto the lipid carrier undecaprenyl phosphate, yielding undecaprenyl-pyrophosphoryl-MurNAc-pentapeptide, known as lipid I. This chain is Phospho-N-acetylmuramoyl-pentapeptide-transferase, found in Latilactobacillus sakei subsp. sakei (strain 23K) (Lactobacillus sakei subsp. sakei).